A 343-amino-acid chain; its full sequence is Probable dual-specificity RNA methyltransferase RlmN (343 aa).

The active-site Proton acceptor is the Glu83. Positions 89–323 (YLDRKTICVS…VSVRRSRGKD (235 aa)) constitute a Radical SAM core domain. An intrachain disulfide couples Cys96 to Cys328. The [4Fe-4S] cluster site is built by Cys103, Cys107, and Cys110. Residues 153–154 (GE), Ser185, 209–211 (SLH), and Asn285 contribute to the S-adenosyl-L-methionine site. The active-site S-methylcysteine intermediate is Cys328.

Belongs to the radical SAM superfamily. RlmN family. Requires [4Fe-4S] cluster as cofactor.

Its subcellular location is the cytoplasm. It carries out the reaction adenosine(2503) in 23S rRNA + 2 reduced [2Fe-2S]-[ferredoxin] + 2 S-adenosyl-L-methionine = 2-methyladenosine(2503) in 23S rRNA + 5'-deoxyadenosine + L-methionine + 2 oxidized [2Fe-2S]-[ferredoxin] + S-adenosyl-L-homocysteine. It catalyses the reaction adenosine(37) in tRNA + 2 reduced [2Fe-2S]-[ferredoxin] + 2 S-adenosyl-L-methionine = 2-methyladenosine(37) in tRNA + 5'-deoxyadenosine + L-methionine + 2 oxidized [2Fe-2S]-[ferredoxin] + S-adenosyl-L-homocysteine. Its function is as follows. Specifically methylates position 2 of adenine 2503 in 23S rRNA and position 2 of adenine 37 in tRNAs. The sequence is that of Probable dual-specificity RNA methyltransferase RlmN from Deinococcus deserti (strain DSM 17065 / CIP 109153 / LMG 22923 / VCD115).